The chain runs to 159 residues: Ribosome maturation factor RimP (159 aa).

This sequence belongs to the RimP family.

The protein resides in the cytoplasm. In terms of biological role, required for maturation of 30S ribosomal subunits. This Streptococcus pneumoniae serotype 19F (strain G54) protein is Ribosome maturation factor RimP.